Here is a 1772-residue protein sequence, read N- to C-terminus: Merozoite surface protein 1 (1772 aa).

Positions 1–18 (MKVIGLLFSFVFFAIKCK) are cleaved as a signal peptide. An N-linked (GlcNAc...) asparagine glycan is attached at Asn-54. Positions 290–319 (TGGQSSTEPGSGGSSASGTSSSGQASAGTG) are disordered. Residues 305 to 319 (ASGTSSSGQASAGTG) are compositionally biased toward low complexity. N-linked (GlcNAc...) asparagine glycosylation is found at Asn-406 and Asn-646. The tract at residues 703–796 (KERMEQGPAI…QPSQAASSTT (94 aa)) is disordered. The segment covering 724–796 (SAESSTDRST…QPSQAASSTT (73 aa)) has biased composition (low complexity). Asn-829 carries N-linked (GlcNAc...) asparagine glycosylation. The tract at residues 924-1070 (AAPTPVTPAA…SRAESEEDMP (147 aa)) is disordered. Low complexity-rich tracts occupy residues 930–946 (TPAA…PDVQ) and 956–1052 (SQQP…NSQS). 2 N-linked (GlcNAc...) asparagine glycosylation sites follow: Asn-1018 and Asn-1090. Residues 1362–1383 (GAVPGSGTDTRVAGSSVDDNED) form a disordered region. 4 N-linked (GlcNAc...) asparagine glycosylation sites follow: Asn-1408, Asn-1446, Asn-1541, and Asn-1629. EGF-like domains follow at residues 1661-1703 (HVCV…VENN) and 1704-1752 (NPTC…FCSS). A disulfide bridge connects residues Cys-1663 and Cys-1675. A glycan (N-linked (GlcNAc...) asparagine) is linked at Asn-1680. 4 cysteine pairs are disulfide-bonded: Cys-1687-Cys-1699, Cys-1707-Cys-1720, Cys-1714-Cys-1734, and Cys-1736-Cys-1750. The GPI-anchor amidated serine moiety is linked to residue Ser-1751. A propeptide spans 1752–1772 (SSSFMGLSILLIITLIVFNIF) (removed in mature form).

In terms of assembly, forms a complex composed of subunits p83, p30, p38, and p42 which remain non-covalently associated; the complex is formed at the merozoite surface prior to egress from host erythrocytes. In terms of processing, the p230 precursor is cleaved by SUB1 prior to merozoite egress into 4 subunits p83, p30, p38, and p42 which remain non-covalently associated. In a second processing step during erythrocyte invasion, p42 is cleaved by SUB2 into p33 and p19; the latter remains attached to the merozoite surface via its GPI-anchor and stays on the surface during the subsequent ring stage.

It is found in the cell membrane. Its subcellular location is the secreted. Its function is as follows. During the asexual blood stage, involved in merozoite egress from host erythrocytes possibly via its interaction with the host cytoskeleton protein spectrin resulting in the destabilization of the host cytoskeleton and thus leading to erythrocyte cell membrane rupture. Involved in the binding to host erythrocytes and is required for host erythrocyte invasion. In Plasmodium yoelii yoelii, this protein is Merozoite surface protein 1.